We begin with the raw amino-acid sequence, 204 residues long: Large ribosomal subunit protein uL13 (204 aa).

This sequence belongs to the universal ribosomal protein uL13 family.

This Spodoptera frugiperda (Fall armyworm) protein is Large ribosomal subunit protein uL13 (RpL13A).